A 188-amino-acid chain; its full sequence is dCTP deaminase (188 aa).

Residues 111–116, 135–137, Gln-156, Tyr-170, and Gln-180 contribute to the dCTP site; these read KSTYAR and TLE. Glu-137 functions as the Proton donor/acceptor in the catalytic mechanism.

It belongs to the dCTP deaminase family. Homotrimer.

The enzyme catalyses dCTP + H2O + H(+) = dUTP + NH4(+). It participates in pyrimidine metabolism; dUMP biosynthesis; dUMP from dCTP (dUTP route): step 1/2. Catalyzes the deamination of dCTP to dUTP. The protein is dCTP deaminase of Neisseria meningitidis serogroup B (strain ATCC BAA-335 / MC58).